Here is a 1627-residue protein sequence, read N- to C-terminus: Pleckstrin homology domain-containing family G member 4B (1627 aa).

Disordered regions lie at residues 211 to 349 (YSSC…VQPR), 381 to 475 (LTGA…GQAV), 501 to 537 (VSTD…GTGD), 959 to 1008 (SEAA…PAQP), 1049 to 1111 (TTAH…SKGL), and 1124 to 1159 (PLWQ…QVGS). Polar residues predominate over residues 241 to 251 (GSASCPDTLTS). 2 stretches are compositionally biased toward basic and acidic residues: residues 262–273 (QLRHLPYPERAE) and 310–322 (ERPD…DRPK). Positions 465-474 (RPGGHLGGQA) are enriched in gly residues. The span at 975 to 985 (PKHERAQEAMR) shows a compositional bias: basic and acidic residues. Residues 1057 to 1068 (SACSSEPTQTLA) show a composition bias toward polar residues. Residues 1070–1081 (RPRKHPQKKMIK) show a composition bias toward basic residues. Composition is skewed to polar residues over residues 1101–1111 (PDHTSVFSKGL) and 1133–1144 (PVTQSRSLSSPS). The DH domain occupies 1161–1340 (RLRHIMAEMI…CFQLRHGNDL (180 aa)). Residues 1352 to 1460 (NLKEQGQLRC…WTDVIGRILW (109 aa)) enclose the PH domain. Residues 1519 to 1558 (KGTESQMRGSTAVSSSDHAAPFKRPHSTISDSSTSSSSSQ) are disordered. A compositionally biased stretch (polar residues) spans 1521–1535 (TESQMRGSTAVSSSD). Positions 1545 to 1558 (STISDSSTSSSSSQ) are enriched in low complexity.

In terms of assembly, found in a complex with ARHGEF11 and ARHGEF12; binding to ARHGEF11 and ARHGEF12 enhances CDC42 GEF activity of PLEKHG4B, and PLEKHG4B, in turn, inhibits ARHGEF11- and ARHGEF12-mediated RHOA activation. Interacts with ANXA2; this interaction is required for PLEKHG4B localization to cell-cell adhesions.

The protein localises to the basal cell membrane. It localises to the cell junction. It is found in the nucleus. Its subcellular location is the cytoplasm. Functionally, guanine nucleotide exchange factor (GEF) which specifically activates small GTPase CDC42 by exchanging bound GDP for free GTP. Plays a role in actin cytoskeletal remodeling in the late stage of cell-cell junction formation by regulating the contractility of actin filaments, which prompts the conversion from 'open' to 'closed' junctions. The polypeptide is Pleckstrin homology domain-containing family G member 4B (Homo sapiens (Human)).